The primary structure comprises 337 residues: tRNA N6-adenosine threonylcarbamoyltransferase (337 aa).

2 residues coordinate Fe cation: His111 and His115. Substrate is bound by residues 134–138, Asp167, Gly180, and Asn272; that span reads LVSGG. Residue Asp300 participates in Fe cation binding.

It belongs to the KAE1 / TsaD family. The cofactor is Fe(2+).

The protein localises to the cytoplasm. It catalyses the reaction L-threonylcarbamoyladenylate + adenosine(37) in tRNA = N(6)-L-threonylcarbamoyladenosine(37) in tRNA + AMP + H(+). In terms of biological role, required for the formation of a threonylcarbamoyl group on adenosine at position 37 (t(6)A37) in tRNAs that read codons beginning with adenine. Is involved in the transfer of the threonylcarbamoyl moiety of threonylcarbamoyl-AMP (TC-AMP) to the N6 group of A37, together with TsaE and TsaB. TsaD likely plays a direct catalytic role in this reaction. This is tRNA N6-adenosine threonylcarbamoyltransferase from Escherichia coli O45:K1 (strain S88 / ExPEC).